Here is a 352-residue protein sequence, read N- to C-terminus: MASSINGRKPSEIFKAQALLYKHIYAFIDSMSLKWAVEMNIPNIIQNHGKPISLSNLVSILQVPSSKIGNVRRLMRYLAHNGFFEIITKEEESYALTVASELLVRGSDLCLAPMVECVLDPTLSGSYHELKKWIYEEDLTLFGVTLGSGFWDFLDKNPEYNTSFNDAMASDSKLINLALRDCDFVFDGLESIVDVGGGTGTTAKIICETFPKLKCIVFDRPQVVENLSGSNNLTYVGGDMFTSIPNADAVLLKYILHNWTDKDCLRILKKCKEAVTNDGKRGKVTIIDMVIDKKKDENQVTQIKLLMDVNMACLNGKERNEEEWKKLFIEAGFQHYKISPLTGFLSLIEIYP.

Residue 118–127 (VLDPTLSGSY) participates in substrate binding. Residues Gly-196, Asp-219, Asp-239, Met-240, and Lys-253 each coordinate S-adenosyl-L-methionine. Catalysis depends on His-257, which acts as the Proton acceptor.

The protein belongs to the class I-like SAM-binding methyltransferase superfamily. Cation-independent O-methyltransferase family. COMT subfamily. Homodimer.

It carries out the reaction a 7-hydroxyisoflavone + S-adenosyl-L-methionine = a 7-methoxyisoflavone + S-adenosyl-L-homocysteine + H(+). It participates in phytoalexin biosynthesis; medicarpin biosynthesis. Functionally, transfers a methyl group to 7-hydroxyls of the isoflavones daidzein, genistein and 6,7,4'-trihydroxyisoflavone. Can also methylate (+)6a-hydroxymaackiain with lower efficiency. The sequence is that of Isoflavone-7-O-methyltransferase 8 from Medicago sativa (Alfalfa).